The following is a 429-amino-acid chain: Enolase (429 aa).

Residue Gln-162 participates in (2R)-2-phosphoglycerate binding. Glu-204 (proton donor) is an active-site residue. 3 residues coordinate Mg(2+): Asp-241, Glu-288, and Asp-315. (2R)-2-phosphoglycerate contacts are provided by Lys-340, Arg-369, Ser-370, and Lys-391. The active-site Proton acceptor is the Lys-340.

This sequence belongs to the enolase family. Mg(2+) is required as a cofactor.

It is found in the cytoplasm. It localises to the secreted. The protein resides in the cell surface. It catalyses the reaction (2R)-2-phosphoglycerate = phosphoenolpyruvate + H2O. The protein operates within carbohydrate degradation; glycolysis; pyruvate from D-glyceraldehyde 3-phosphate: step 4/5. Its function is as follows. Catalyzes the reversible conversion of 2-phosphoglycerate (2-PG) into phosphoenolpyruvate (PEP). It is essential for the degradation of carbohydrates via glycolysis. This Bacteroides fragilis (strain ATCC 25285 / DSM 2151 / CCUG 4856 / JCM 11019 / LMG 10263 / NCTC 9343 / Onslow / VPI 2553 / EN-2) protein is Enolase.